The primary structure comprises 73 residues: Homeodomain-only protein (73 aa).

The segment at residues 3–62 is a DNA-binding region (homeobox; degenerate); sequence AQTASGPTEDQVEILEYNFNKVNKHPDPTTLCLIAAEAGLTEEQTQKWFKQRLAEWRRSE.

In terms of assembly, interacts with serum response factor (SRF). Component of a large complex containing histone deacetylases such as HDAC2. Interacts with the acetylated forms of HSPA1A and HSPA1B. Interacts with HSPA8. In terms of tissue distribution, expressed in the embryonic and adult heart and in the adult brain, liver, lung, skeletal muscle, intestine and spleen. Throughout embryonic and postnatal development, it is expressed in the myocardium.

The protein localises to the nucleus. The protein resides in the cytoplasm. Its function is as follows. Atypical homeodomain protein which does not bind DNA and is required to modulate cardiac growth and development. Acts via its interaction with SRF, thereby modulating the expression of SRF-dependent cardiac-specific genes and cardiac development. Prevents SRF-dependent transcription either by inhibiting SRF binding to DNA or by recruiting histone deacetylase (HDAC) proteins that prevent transcription by SRF. Overexpression causes cardiac hypertrophy. Acts as a co-chaperone for HSPA1A and HSPA1B chaperone proteins and assists in chaperone-mediated protein refolding. The polypeptide is Homeodomain-only protein (Hopx) (Mus musculus (Mouse)).